The chain runs to 1173 residues: WASH complex subunit 4 (1173 aa).

An N-acetylalanine modification is found at Ala-2. Residue Ser-7 is modified to Phosphoserine. The sufficient for interaction with WASHC5 stretch occupies residues 705–1173 (KDLALFFSLN…STVSADPVVK (469 aa)). A coiled-coil region spans residues 1135 to 1161 (RADKTAAEENQEKKEKEEETKTSNGDL). Positions 1142-1155 (EENQEKKEKEEETK) are enriched in basic and acidic residues. Positions 1142–1173 (EENQEKKEKEEETKTSNGDLSDSTVSADPVVK) are disordered. Thr-1154 is modified (phosphothreonine). Residues 1157–1167 (SNGDLSDSTVS) are compositionally biased toward polar residues.

Belongs to the SWIP family. As to quaternary structure, component of the WASH core complex also described as WASH regulatory complex (SHRC) composed of WASH (WASHC1, WASH2P or WASH3P), WASHC2 (WASHC2A or WASHC2C), WASHC3, WASHC4 and WASHC5. The WASH core complex associates via WASHC2 with the F-actin-capping protein dimer (formed by CAPZA1, CAPZA2 or CAPZA3 and CAPZB) in a transient or substoichiometric manner which was initially described as WASH complex.

It localises to the early endosome. In terms of biological role, acts as a component of the WASH core complex that functions as a nucleation-promoting factor (NPF) at the surface of endosomes, where it recruits and activates the Arp2/3 complex to induce actin polymerization, playing a key role in the fission of tubules that serve as transport intermediates during endosome sorting. The protein is WASH complex subunit 4 of Homo sapiens (Human).